Reading from the N-terminus, the 340-residue chain is 4-dimethylallyltryptophan N-methyltransferase easF (340 aa).

This sequence belongs to the methyltransferase superfamily. Homodimer.

The enzyme catalyses 4-(3-methylbut-2-enyl)-L-tryptophan + S-adenosyl-L-methionine = 4-(3-methylbut-2-enyl)-L-abrine + S-adenosyl-L-homocysteine + H(+). It functions in the pathway alkaloid biosynthesis; ergot alkaloid biosynthesis. Its function is as follows. 4-dimethylallyltryptophan N-methyltransferase; part of the gene cluster that mediates the biosynthesis of fungal ergot alkaloid. DmaW catalyzes the first step of ergot alkaloid biosynthesis by condensing dimethylallyl diphosphate (DMAP) and tryptophan to form 4-dimethylallyl-L-tryptophan. The second step is catalyzed by the methyltransferase easF that methylates 4-dimethylallyl-L-tryptophan in the presence of S-adenosyl-L-methionine, resulting in the formation of 4-dimethylallyl-L-abrine. The catalase easC and the FAD-dependent oxidoreductase easE then transform 4-dimethylallyl-L-abrine to chanoclavine-I which is further oxidized by easD in the presence of NAD(+), resulting in the formation of chanoclavine-I aldehyde. Chanoclavine-I aldehyde is the precursor of ergoamides and ergopeptines in Clavicipitaceae, and clavine-type alcaloids such as fumiclavine in Trichocomaceae. However, the metabolites downstream of chanoclavine-I aldehyde in Arthrodermataceae have not been identified yet. The protein is 4-dimethylallyltryptophan N-methyltransferase easF of Arthroderma benhamiae (strain ATCC MYA-4681 / CBS 112371) (Trichophyton mentagrophytes).